A 193-amino-acid chain; its full sequence is Non-specific lipid transfer protein GPI-anchored 2 (193 aa).

Positions 1–22 are cleaved as a signal peptide; it reads MSNVVVIAVVLIVASLTGHVSA. 4 disulfide bridges follow: Cys38/Cys83, Cys48/Cys67, Cys68/Cys110, and Cys81/Cys120. The N-linked (GlcNAc...) asparagine glycan is linked to Asn44. The disordered stretch occupies residues 143–164; it reads APGSMSGAESPGGFGSGPSASR. A lipid anchor (GPI-anchor amidated glycine) is attached at Gly165. A propeptide spans 166-193 (removed in mature form); it reads SDAPSSAPYSLFLNLIIFPLAFAFYIFC.

The protein belongs to the plant LTP family. O-glycosylated on hydroxyprolines; noncontiguous hydroxylproline residues are glycosylated with arabinogalactan. In terms of tissue distribution, up-regulated in the epidermis of top stems. Expressed in roots, cotyledons, seedlings, leaves, stems, buds, flower and silique walls. Preferentially expressed in the shoot apical meristem and the root meristem. Also detected in expanding leaves and petals, developing flowers, and elongating pistils, stamens and siliques.

It localises to the cell membrane. Lipid transfer protein that, together with LTPG1, binds to lipids and functions as a component of the cuticular lipid export machinery that performs extensive export of intracellular lipids (e.g. C29 alkane) from epidermal cells to the surface to build the cuticular wax layer and silique walls. Contributes to pre-invasive defense against some non-host powdery mildew pathogens by preventing the penetration of the epidermal cell wall by the fungal agents (e.g. Blumeria graminis f. sp. hordei (Bgh)). Involved in seed and ovule maturation and development, probably by regulating the fatty acids homeostasis during suberin and sporopollenin biosynthesis or deposition. This chain is Non-specific lipid transfer protein GPI-anchored 2, found in Arabidopsis thaliana (Mouse-ear cress).